Reading from the N-terminus, the 475-residue chain is ATP synthase subunit beta (475 aa).

161-168 (GGAGVGKT) contributes to the ATP binding site.

The protein belongs to the ATPase alpha/beta chains family. As to quaternary structure, F-type ATPases have 2 components, CF(1) - the catalytic core - and CF(0) - the membrane proton channel. CF(1) has five subunits: alpha(3), beta(3), gamma(1), delta(1), epsilon(1). CF(0) has three main subunits: a(1), b(2) and c(9-12). The alpha and beta chains form an alternating ring which encloses part of the gamma chain. CF(1) is attached to CF(0) by a central stalk formed by the gamma and epsilon chains, while a peripheral stalk is formed by the delta and b chains.

The protein localises to the cell membrane. It carries out the reaction ATP + H2O + 4 H(+)(in) = ADP + phosphate + 5 H(+)(out). In terms of biological role, produces ATP from ADP in the presence of a proton gradient across the membrane. The catalytic sites are hosted primarily by the beta subunits. The sequence is that of ATP synthase subunit beta from Mycoplasma mycoides subsp. mycoides SC (strain CCUG 32753 / NCTC 10114 / PG1).